The sequence spans 272 residues: Putative hydro-lyase Rpal_1947 (272 aa).

Belongs to the D-glutamate cyclase family.

The chain is Putative hydro-lyase Rpal_1947 from Rhodopseudomonas palustris (strain TIE-1).